The chain runs to 304 residues: ADP-ribosyl cyclase/cyclic ADP-ribose hydrolase 1 (304 aa).

Residues Met1–Lys21 lie on the Cytoplasmic side of the membrane. Residues Ala22 to Leu44 form a helical; Signal-anchor for type II membrane protein membrane-spanning segment. Topologically, residues Leu45–Thr304 are extracellular. Disulfide bonds link Cys70-Cys86, Cys103-Cys184, and Cys164-Cys177. N-linked (GlcNAc...) asparagine glycosylation occurs at Asn104. Cys123 is a catalytic residue. Asn124 is a glycosylation site (N-linked (GlcNAc...) asparagine). The active site involves Cys205. Asn213 and Asn223 each carry an N-linked (GlcNAc...) asparagine glycan. Intrachain disulfides connect Cys258–Cys279 and Cys291–Cys300.

This sequence belongs to the ADP-ribosyl cyclase family. Homodimer.

Its subcellular location is the membrane. It carries out the reaction NAD(+) = cyclic ADP-beta-D-ribose + nicotinamide + H(+). The catalysed reaction is nicotinate + NADP(+) = nicotinate-adenine dinucleotide phosphate + nicotinamide. The enzyme catalyses NAD(+) + H2O = ADP-D-ribose + nicotinamide + H(+). Its function is as follows. Synthesizes the second messengers cyclic ADP-ribose (cADPR) and nicotinate-adenine dinucleotide phosphate (NAADP), the former a second messenger for glucose-induced insulin secretion, the latter a Ca(2+) mobilizer. Also has cADPR hydrolase activity. This Mus musculus (Mouse) protein is ADP-ribosyl cyclase/cyclic ADP-ribose hydrolase 1 (Cd38).